The following is a 216-amino-acid chain: Large ribosomal subunit protein uL1 (216 aa).

Belongs to the universal ribosomal protein uL1 family. Component of the large ribosomal subunit.

The protein localises to the cytoplasm. Component of the large ribosomal subunit. The ribosome is a large ribonucleoprotein complex responsible for the synthesis of proteins in the cell. This Danio rerio (Zebrafish) protein is Large ribosomal subunit protein uL1 (rpl10a).